We begin with the raw amino-acid sequence, 341 residues long: Phenylalanine--tRNA ligase alpha subunit (341 aa).

Glutamate 259 is a binding site for Mg(2+).

The protein belongs to the class-II aminoacyl-tRNA synthetase family. Phe-tRNA synthetase alpha subunit type 1 subfamily. Tetramer of two alpha and two beta subunits. Requires Mg(2+) as cofactor.

It is found in the cytoplasm. The catalysed reaction is tRNA(Phe) + L-phenylalanine + ATP = L-phenylalanyl-tRNA(Phe) + AMP + diphosphate + H(+). In Mycobacterium bovis (strain ATCC BAA-935 / AF2122/97), this protein is Phenylalanine--tRNA ligase alpha subunit.